Consider the following 1089-residue polypeptide: Carbamoyl phosphate synthase large chain (1089 aa).

The interval 1 to 399 is carboxyphosphate synthetic domain; sequence MPKRTDIKSI…SIQKALCSLE (399 aa). ATP contacts are provided by Arg-127, Arg-167, Gly-173, Gly-174, Glu-206, Leu-208, Glu-213, Gly-239, Val-240, His-241, Gln-283, and Glu-297. An ATP-grasp 1 domain is found at 131–326; it reads KECMKKIGMD…IAKVATLLAV (196 aa). The Mg(2+) site is built by Gln-283, Glu-297, and Asn-299. Residues Gln-283, Glu-297, and Asn-299 each contribute to the Mn(2+) site. The oligomerization domain stretch occupies residues 400–553; sequence RSLSGFDRVK…NVSELTQSKN (154 aa). The carbamoyl phosphate synthetic domain stretch occupies residues 554-951; it reads DAKDKKEKKV…SYAKSQIASF (398 aa). The ATP-grasp 2 domain maps to 680 to 871; that stretch reads AEFITKLGIN…LAKVATRVMW (192 aa). ATP contacts are provided by Arg-716, Gln-755, Leu-757, Glu-762, Gly-787, Ile-788, His-789, Ser-790, Gln-830, and Glu-842. Residues Gln-830, Glu-842, and Asn-844 each coordinate Mg(2+). Mn(2+)-binding residues include Gln-830, Glu-842, and Asn-844. Residues 952–1089 enclose the MGS-like domain; the sequence is NHLPEQGVVF…VKSLQEWLKS (138 aa). Residues 952–1089 form an allosteric domain region; sequence NHLPEQGVVF…VKSLQEWLKS (138 aa).

It belongs to the CarB family. Composed of two chains; the small (or glutamine) chain promotes the hydrolysis of glutamine to ammonia, which is used by the large (or ammonia) chain to synthesize carbamoyl phosphate. Tetramer of heterodimers (alpha,beta)4. The cofactor is Mg(2+). It depends on Mn(2+) as a cofactor.

The enzyme catalyses hydrogencarbonate + L-glutamine + 2 ATP + H2O = carbamoyl phosphate + L-glutamate + 2 ADP + phosphate + 2 H(+). It catalyses the reaction hydrogencarbonate + NH4(+) + 2 ATP = carbamoyl phosphate + 2 ADP + phosphate + 2 H(+). Its pathway is amino-acid biosynthesis; L-arginine biosynthesis; carbamoyl phosphate from bicarbonate: step 1/1. The protein operates within pyrimidine metabolism; UMP biosynthesis via de novo pathway; (S)-dihydroorotate from bicarbonate: step 1/3. Functionally, large subunit of the glutamine-dependent carbamoyl phosphate synthetase (CPSase). CPSase catalyzes the formation of carbamoyl phosphate from the ammonia moiety of glutamine, carbonate, and phosphate donated by ATP, constituting the first step of 2 biosynthetic pathways, one leading to arginine and/or urea and the other to pyrimidine nucleotides. The large subunit (synthetase) binds the substrates ammonia (free or transferred from glutamine from the small subunit), hydrogencarbonate and ATP and carries out an ATP-coupled ligase reaction, activating hydrogencarbonate by forming carboxy phosphate which reacts with ammonia to form carbamoyl phosphate. The polypeptide is Carbamoyl phosphate synthase large chain (Campylobacter jejuni subsp. jejuni serotype O:2 (strain ATCC 700819 / NCTC 11168)).